A 246-amino-acid chain; its full sequence is Ribonuclease 3 (246 aa).

The RNase III domain occupies 8–137; it reads ANRLKTRLGF…LLGAIYLDQG (130 aa). Residue glutamate 50 participates in Mg(2+) binding. The active site involves aspartate 54. Mg(2+)-binding residues include aspartate 123 and glutamate 126. Glutamate 126 is an active-site residue. The region spanning 164 to 233 is the DRBM domain; the sequence is DYKTELQEIL…AKDAFQHLEG (70 aa). A disordered region spans residues 212-246; it reads SGHSKKEAEQQAAKDAFQHLEGMGKSGHKSAGPIR.

The protein belongs to the ribonuclease III family. As to quaternary structure, homodimer. Requires Mg(2+) as cofactor.

It localises to the cytoplasm. It catalyses the reaction Endonucleolytic cleavage to 5'-phosphomonoester.. Functionally, digests double-stranded RNA. Involved in the processing of primary rRNA transcript to yield the immediate precursors to the large and small rRNAs (23S and 16S). Processes some mRNAs, and tRNAs when they are encoded in the rRNA operon. Processes pre-crRNA and tracrRNA of type II CRISPR loci if present in the organism. The polypeptide is Ribonuclease 3 (Desulforamulus reducens (strain ATCC BAA-1160 / DSM 100696 / MI-1) (Desulfotomaculum reducens)).